A 225-amino-acid polypeptide reads, in one-letter code: PKHD-type hydroxylase YbiX (225 aa).

In terms of domain architecture, Fe2OG dioxygenase spans 78 to 177 (TLSTPLFNRY…RVASFMWIQS (100 aa)). 3 residues coordinate Fe cation: His-96, Asp-98, and His-158. Residue Arg-168 participates in 2-oxoglutarate binding.

Fe(2+) serves as cofactor. The cofactor is L-ascorbate.

The chain is PKHD-type hydroxylase YbiX from Shigella flexneri serotype 5b (strain 8401).